A 495-amino-acid chain; its full sequence is Cytochrome P450 monooxygenase 88 (495 aa).

The chain crosses the membrane as a helical span at residues 2-22 (FLQIVTSVLATGLLYALISVL). N-linked (GlcNAc...) asparagine glycosylation is found at Asn-25 and Asn-198. Cys-428 contributes to the heme binding site.

Belongs to the cytochrome P450 family. Requires heme as cofactor.

The protein localises to the membrane. Its pathway is secondary metabolite biosynthesis. In terms of biological role, cytochrome P450 monooxygenase that is able to use 4-ethoxybenzoic acid as a substrate for oxidation. The protein is Cytochrome P450 monooxygenase 88 of Postia placenta (strain ATCC 44394 / Madison 698-R) (Brown rot fungus).